The following is a 456-amino-acid chain: Bifunctional protein GlmU (456 aa).

Residues 1 to 229 (MSNRPMSVVI…TTETDGVNNR (229 aa)) are pyrophosphorylase. UDP-N-acetyl-alpha-D-glucosamine is bound by residues 11–14 (LAAG), lysine 25, glutamine 76, 81–82 (GT), 103–105 (YGD), glycine 140, glutamate 154, asparagine 169, and asparagine 227. A Mg(2+)-binding site is contributed by aspartate 105. Asparagine 227 lines the Mg(2+) pocket. The interval 230-250 (LQLATLERVYQAEQAEKLLLS) is linker. An N-acetyltransferase region spans residues 251 to 456 (GVMLQDPARF…ASWQRPQKKK (206 aa)). UDP-N-acetyl-alpha-D-glucosamine contacts are provided by arginine 333 and lysine 351. The active-site Proton acceptor is histidine 363. Residues tyrosine 366 and asparagine 377 each coordinate UDP-N-acetyl-alpha-D-glucosamine. Residues alanine 380, 386–387 (NY), serine 405, alanine 423, and arginine 440 each bind acetyl-CoA.

It in the N-terminal section; belongs to the N-acetylglucosamine-1-phosphate uridyltransferase family. This sequence in the C-terminal section; belongs to the transferase hexapeptide repeat family. As to quaternary structure, homotrimer. Mg(2+) is required as a cofactor.

The protein localises to the cytoplasm. It carries out the reaction alpha-D-glucosamine 1-phosphate + acetyl-CoA = N-acetyl-alpha-D-glucosamine 1-phosphate + CoA + H(+). The catalysed reaction is N-acetyl-alpha-D-glucosamine 1-phosphate + UTP + H(+) = UDP-N-acetyl-alpha-D-glucosamine + diphosphate. Its pathway is nucleotide-sugar biosynthesis; UDP-N-acetyl-alpha-D-glucosamine biosynthesis; N-acetyl-alpha-D-glucosamine 1-phosphate from alpha-D-glucosamine 6-phosphate (route II): step 2/2. It participates in nucleotide-sugar biosynthesis; UDP-N-acetyl-alpha-D-glucosamine biosynthesis; UDP-N-acetyl-alpha-D-glucosamine from N-acetyl-alpha-D-glucosamine 1-phosphate: step 1/1. The protein operates within bacterial outer membrane biogenesis; LPS lipid A biosynthesis. Catalyzes the last two sequential reactions in the de novo biosynthetic pathway for UDP-N-acetylglucosamine (UDP-GlcNAc). The C-terminal domain catalyzes the transfer of acetyl group from acetyl coenzyme A to glucosamine-1-phosphate (GlcN-1-P) to produce N-acetylglucosamine-1-phosphate (GlcNAc-1-P), which is converted into UDP-GlcNAc by the transfer of uridine 5-monophosphate (from uridine 5-triphosphate), a reaction catalyzed by the N-terminal domain. The sequence is that of Bifunctional protein GlmU from Erwinia tasmaniensis (strain DSM 17950 / CFBP 7177 / CIP 109463 / NCPPB 4357 / Et1/99).